Here is a 473-residue protein sequence, read N- to C-terminus: Aspartyl/glutamyl-tRNA(Asn/Gln) amidotransferase subunit B (473 aa).

This sequence belongs to the GatB/GatE family. GatB subfamily. In terms of assembly, heterotrimer of A, B and C subunits.

The enzyme catalyses L-glutamyl-tRNA(Gln) + L-glutamine + ATP + H2O = L-glutaminyl-tRNA(Gln) + L-glutamate + ADP + phosphate + H(+). It catalyses the reaction L-aspartyl-tRNA(Asn) + L-glutamine + ATP + H2O = L-asparaginyl-tRNA(Asn) + L-glutamate + ADP + phosphate + 2 H(+). Allows the formation of correctly charged Asn-tRNA(Asn) or Gln-tRNA(Gln) through the transamidation of misacylated Asp-tRNA(Asn) or Glu-tRNA(Gln) in organisms which lack either or both of asparaginyl-tRNA or glutaminyl-tRNA synthetases. The reaction takes place in the presence of glutamine and ATP through an activated phospho-Asp-tRNA(Asn) or phospho-Glu-tRNA(Gln). The sequence is that of Aspartyl/glutamyl-tRNA(Asn/Gln) amidotransferase subunit B from Methanococcoides burtonii (strain DSM 6242 / NBRC 107633 / OCM 468 / ACE-M).